The primary structure comprises 425 residues: Glutamyl-tRNA reductase (425 aa).

Residues 47–50, serine 107, 112–114, and glutamine 118 contribute to the substrate site; these read TCNR and EDQ. The active-site Nucleophile is the cysteine 48. 187–192 serves as a coordination point for NADP(+); it reads GAGHIA.

The protein belongs to the glutamyl-tRNA reductase family. As to quaternary structure, homodimer.

The enzyme catalyses (S)-4-amino-5-oxopentanoate + tRNA(Glu) + NADP(+) = L-glutamyl-tRNA(Glu) + NADPH + H(+). It functions in the pathway porphyrin-containing compound metabolism; protoporphyrin-IX biosynthesis; 5-aminolevulinate from L-glutamyl-tRNA(Glu): step 1/2. The protein operates within porphyrin-containing compound metabolism; chlorophyll biosynthesis. Functionally, catalyzes the NADPH-dependent reduction of glutamyl-tRNA(Glu) to glutamate 1-semialdehyde (GSA). The protein is Glutamyl-tRNA reductase of Roseiflexus sp. (strain RS-1).